A 243-amino-acid chain; its full sequence is Small ribosomal subunit protein uS3 (243 aa).

Residues 38–106 enclose the KH type-2 domain; it reads IRKYLNARLA…DIQINIFEVK (69 aa). Residues 217–243 form a disordered region; that stretch reads TQTKESGRGGNGNNNGGKNFKRKKNNR.

The protein belongs to the universal ribosomal protein uS3 family. Part of the 30S ribosomal subunit. Forms a tight complex with proteins S10 and S14.

Its function is as follows. Binds the lower part of the 30S subunit head. Binds mRNA in the 70S ribosome, positioning it for translation. This Phocaeicola vulgatus (strain ATCC 8482 / DSM 1447 / JCM 5826 / CCUG 4940 / NBRC 14291 / NCTC 11154) (Bacteroides vulgatus) protein is Small ribosomal subunit protein uS3.